A 603-amino-acid polypeptide reads, in one-letter code: Terpenoid synthase 25 (603 aa).

Mg(2+)-binding residues include Asp356, Asp360, Asn500, Thr504, and Glu508. A DDXXD motif motif is present at residues 356-360 (DDTCD).

Belongs to the terpene synthase family. Tpsa subfamily. Requires Mg(2+) as cofactor. It depends on Mn(2+) as a cofactor. In terms of tissue distribution, predominantly expressed in roots but also in flowers.

It is found in the cytoplasm. It participates in secondary metabolite biosynthesis; terpenoid biosynthesis. Its function is as follows. Involved in terpene biosynthesis in roots. Possesses sesquiterpene (C15) synthase activity in vitro. Does not seem to be involved in diterpene (C20) biosynthesis. The polypeptide is Terpenoid synthase 25 (Arabidopsis thaliana (Mouse-ear cress)).